A 261-amino-acid polypeptide reads, in one-letter code: Putative [LysW]-aminoadipate/[LysW]-glutamate kinase (261 aa).

Substrate is bound by residues 35-36 (GG), Arg-62, and Asn-162.

The protein belongs to the acetylglutamate kinase family. LysZ subfamily.

It is found in the cytoplasm. The catalysed reaction is [amino-group carrier protein]-C-terminal-N-(1,4-dicarboxybutan-1-yl)-L-glutamine + ATP = [amino-group carrier protein]-C-terminal-N-(1-carboxy-5-phosphooxy-5-oxopentan-1-yl)-L-glutamine + ADP. It catalyses the reaction [amino-group carrier protein]-C-terminal-gamma-(L-glutamyl)-L-glutamate + ATP = [amino-group carrier protein]-C-terminal-gamma-(5-phospho-L-glutamyl)-L-glutamate + ADP. It participates in amino-acid biosynthesis; L-lysine biosynthesis via AAA pathway; L-lysine from L-alpha-aminoadipate (Thermus route): step 2/5. The protein operates within amino-acid biosynthesis; L-arginine biosynthesis. In terms of biological role, involved in both the arginine and lysine biosynthetic pathways. Phosphorylates the LysW-bound precursors glutamate (for arginine biosynthesis), respectively alpha-aminoadipate (for lysine biosynthesis). In Pyrobaculum aerophilum (strain ATCC 51768 / DSM 7523 / JCM 9630 / CIP 104966 / NBRC 100827 / IM2), this protein is Putative [LysW]-aminoadipate/[LysW]-glutamate kinase.